A 625-amino-acid polypeptide reads, in one-letter code: Probable potassium transport system protein Kup 2 (625 aa).

A run of 12 helical transmembrane segments spans residues 15-35 (LSFA…LYAF), 52-72 (ILSL…LVIV), 98-118 (GGWL…DGML), 134-154 (LSPN…FFLF), 164-184 (IGVY…ILGF), 212-232 (FALF…ALFA), 246-266 (WFAV…AFVL), 284-304 (FLPV…QAII), 336-356 (VYLP…VVIF), 365-385 (AYGI…GIIA), 394-414 (FKIL…AGNI), and 417-437 (LLTG…VMYT).

Belongs to the HAK/KUP transporter (TC 2.A.72) family.

It localises to the cell inner membrane. It carries out the reaction K(+)(in) + H(+)(in) = K(+)(out) + H(+)(out). Transport of potassium into the cell. Likely operates as a K(+):H(+) symporter. This chain is Probable potassium transport system protein Kup 2, found in Legionella pneumophila (strain Paris).